We begin with the raw amino-acid sequence, 715 residues long: Elongation factor G (715 aa).

One can recognise a tr-type G domain in the interval 12 to 309 (RRVRNIGIMA…GVIDYLPSPL (298 aa)). GTP is bound by residues 21–28 (AHIDAGKT), 108–112 (DTPGH), and 162–165 (NKMD).

This sequence belongs to the TRAFAC class translation factor GTPase superfamily. Classic translation factor GTPase family. EF-G/EF-2 subfamily.

It localises to the cytoplasm. Catalyzes the GTP-dependent ribosomal translocation step during translation elongation. During this step, the ribosome changes from the pre-translocational (PRE) to the post-translocational (POST) state as the newly formed A-site-bound peptidyl-tRNA and P-site-bound deacylated tRNA move to the P and E sites, respectively. Catalyzes the coordinated movement of the two tRNA molecules, the mRNA and conformational changes in the ribosome. This is Elongation factor G from Rubrobacter xylanophilus (strain DSM 9941 / JCM 11954 / NBRC 16129 / PRD-1).